The primary structure comprises 812 residues: Probable inorganic carbon transporter subunit DabA (812 aa).

Positions 337, 339, 499, and 514 each coordinate Zn(2+).

The protein belongs to the inorganic carbon transporter (TC 9.A.2) DabA family. Forms a complex with DabB. Zn(2+) is required as a cofactor.

It is found in the cell inner membrane. Functionally, part of an energy-coupled inorganic carbon pump. In Xanthomonas euvesicatoria pv. vesicatoria (strain 85-10) (Xanthomonas campestris pv. vesicatoria), this protein is Probable inorganic carbon transporter subunit DabA.